The chain runs to 466 residues: Asparagine--tRNA ligase (466 aa).

The protein belongs to the class-II aminoacyl-tRNA synthetase family. As to quaternary structure, homodimer.

The protein localises to the cytoplasm. The catalysed reaction is tRNA(Asn) + L-asparagine + ATP = L-asparaginyl-tRNA(Asn) + AMP + diphosphate + H(+). This chain is Asparagine--tRNA ligase, found in Serratia proteamaculans (strain 568).